We begin with the raw amino-acid sequence, 131 residues long: Probable calcium-binding protein CML34 (131 aa).

EF-hand domains lie at 1-33 (MSAKRVFEKFDKNKDGKLSLDEFREVALAFSPY), 34-69 (FTQEDIVKFFEEIDVDGNGELNADEFTSCIEKMLKE), 70-97 (VFVFCDVDGDGKIPASESYVTMTSLGKK), and 98-131 (FTEETSAEKVRAADVDGDGYLNFDEFMALVIGDI). Ca(2+) contacts are provided by D11, N13, D15, K17, E22, D47, D49, N51, E53, and E58. Ca(2+) is bound by residues D111, D113, D115, Y117, and E122.

Potential calcium sensor. The chain is Probable calcium-binding protein CML34 (CML34) from Arabidopsis thaliana (Mouse-ear cress).